A 323-amino-acid polypeptide reads, in one-letter code: MHNKFYRGRFAVAPMLDWTTRHCRYFHRQFSQQALLYTEMITAPAILHAKYDLLEYDPAEQPVALQLGGSDPTQLANCAKLVQARGYTEINLNVGCPSDRVQNGMFGACLMANADLVADCIKAMQDVVDIPVTIKHRIGIDTLDSYAFLCDFIDKIQPYSQDFIVHARKAWLSGLSPKENREIPPLDYERVYQLKRDFPQLNISINGGIKTIDEIKQHLTKVDGVMVGREAYQNPALLGEIDQQLFDQNQPLITARIAVENMLPYIEQQLSKGVYLNHIVRHMLGAFQNCKGARQWRRHLSENACKQGAGIEVVEQALRFVTE.

FMN-binding positions include 14–16 (PML) and Q66. C96 serves as the catalytic Proton donor. Residues K135, H166, 206-208 (NGG), and 228-229 (GR) each bind FMN.

This sequence belongs to the Dus family. DusA subfamily. FMN serves as cofactor.

It carries out the reaction 5,6-dihydrouridine(20) in tRNA + NADP(+) = uridine(20) in tRNA + NADPH + H(+). It catalyses the reaction 5,6-dihydrouridine(20) in tRNA + NAD(+) = uridine(20) in tRNA + NADH + H(+). The catalysed reaction is 5,6-dihydrouridine(20a) in tRNA + NADP(+) = uridine(20a) in tRNA + NADPH + H(+). The enzyme catalyses 5,6-dihydrouridine(20a) in tRNA + NAD(+) = uridine(20a) in tRNA + NADH + H(+). Its function is as follows. Catalyzes the synthesis of 5,6-dihydrouridine (D), a modified base found in the D-loop of most tRNAs, via the reduction of the C5-C6 double bond in target uridines. Specifically modifies U20 and U20a in tRNAs. The protein is tRNA-dihydrouridine(20/20a) synthase of Haemophilus ducreyi (strain 35000HP / ATCC 700724).